Here is a 337-residue protein sequence, read N- to C-terminus: tRNA N6-adenosine threonylcarbamoyltransferase (337 aa).

2 residues coordinate Fe cation: H111 and H115. Substrate is bound by residues 134 to 138 (LVSGG), D167, G180, and N272. Fe cation is bound at residue D300.

Belongs to the KAE1 / TsaD family. The cofactor is Fe(2+).

The protein localises to the cytoplasm. The enzyme catalyses L-threonylcarbamoyladenylate + adenosine(37) in tRNA = N(6)-L-threonylcarbamoyladenosine(37) in tRNA + AMP + H(+). In terms of biological role, required for the formation of a threonylcarbamoyl group on adenosine at position 37 (t(6)A37) in tRNAs that read codons beginning with adenine. Is involved in the transfer of the threonylcarbamoyl moiety of threonylcarbamoyl-AMP (TC-AMP) to the N6 group of A37, together with TsaE and TsaB. TsaD likely plays a direct catalytic role in this reaction. This is tRNA N6-adenosine threonylcarbamoyltransferase from Pectobacterium atrosepticum (strain SCRI 1043 / ATCC BAA-672) (Erwinia carotovora subsp. atroseptica).